Here is a 615-residue protein sequence, read N- to C-terminus: uncharacterized protein (615 aa).

The protein belongs to the NodU/CmcH family.

This is an uncharacterized protein from Synechocystis sp. (strain ATCC 27184 / PCC 6803 / Kazusa).